The sequence spans 228 residues: ATP-dependent dethiobiotin synthetase BioD (228 aa).

14–19 lines the ATP pocket; that stretch reads DAGKTL. A Mg(2+)-binding site is contributed by Thr18. Residue Lys39 is part of the active site. Residues Asp56, 117 to 120, and 206 to 208 each bind ATP; these read EGAG and PRL. Mg(2+) contacts are provided by Asp56 and Glu117.

It belongs to the dethiobiotin synthetase family. Homodimer. Mg(2+) serves as cofactor.

It localises to the cytoplasm. It catalyses the reaction (7R,8S)-7,8-diammoniononanoate + CO2 + ATP = (4R,5S)-dethiobiotin + ADP + phosphate + 3 H(+). Its pathway is cofactor biosynthesis; biotin biosynthesis; biotin from 7,8-diaminononanoate: step 1/2. Catalyzes a mechanistically unusual reaction, the ATP-dependent insertion of CO2 between the N7 and N8 nitrogen atoms of 7,8-diaminopelargonic acid (DAPA, also called 7,8-diammoniononanoate) to form a ureido ring. The polypeptide is ATP-dependent dethiobiotin synthetase BioD (Cellvibrio japonicus (strain Ueda107) (Pseudomonas fluorescens subsp. cellulosa)).